Here is a 173-residue protein sequence, read N- to C-terminus: ATP synthase subunit b (173 aa).

The helical transmembrane segment at leucine 12 to valine 32 threads the bilayer.

The protein belongs to the ATPase B chain family. In terms of assembly, F-type ATPases have 2 components, F(1) - the catalytic core - and F(0) - the membrane proton channel. F(1) has five subunits: alpha(3), beta(3), gamma(1), delta(1), epsilon(1). F(0) has three main subunits: a(1), b(2) and c(10-14). The alpha and beta chains form an alternating ring which encloses part of the gamma chain. F(1) is attached to F(0) by a central stalk formed by the gamma and epsilon chains, while a peripheral stalk is formed by the delta and b chains.

Its subcellular location is the cell inner membrane. In terms of biological role, f(1)F(0) ATP synthase produces ATP from ADP in the presence of a proton or sodium gradient. F-type ATPases consist of two structural domains, F(1) containing the extramembraneous catalytic core and F(0) containing the membrane proton channel, linked together by a central stalk and a peripheral stalk. During catalysis, ATP synthesis in the catalytic domain of F(1) is coupled via a rotary mechanism of the central stalk subunits to proton translocation. Component of the F(0) channel, it forms part of the peripheral stalk, linking F(1) to F(0). This Leptospira borgpetersenii serovar Hardjo-bovis (strain JB197) protein is ATP synthase subunit b.